The primary structure comprises 460 residues: Probable fibrosin-1 (460 aa).

K8 participates in a covalent cross-link: Glycyl lysine isopeptide (Lys-Gly) (interchain with G-Cter in SUMO2). Disordered regions lie at residues 40-79, 205-311, and 406-460; these read SLQGAFQPKSTNPELPPRLGPVPSGLSQKGTQIPDHFRPP, FAQK…KEEA, and YSRL…RADR. The segment covering 212–223 has biased composition (pro residues); sequence GAPPAFASPPDP. 2 positions are modified to asymmetric dimethylarginine: R229 and R239. Over residues 248–272 the composition is skewed to basic and acidic residues; that stretch reads GSDKERPVERREPSITKEEKDRDLP. S281 carries the phosphoserine modification. Residues 288 to 311 show a composition bias toward basic and acidic residues; sequence RAGEEGPRPTKESVRVKEERKEEA. Over residues 436-453 the composition is skewed to pro residues; sequence APPPLVPAPRPSSPPRGP.

In Homo sapiens (Human), this protein is Probable fibrosin-1 (FBRS).